Consider the following 388-residue polypeptide: Succinate--CoA ligase [ADP-forming] subunit beta (388 aa).

In terms of domain architecture, ATP-grasp spans 9-244 (KQLFARYGLP…PSQEDSREAH (236 aa)). Residues Lys46, 53-55 (GRG), Glu99, Thr102, and Glu107 contribute to the ATP site. Positions 199 and 213 each coordinate Mg(2+). Substrate contacts are provided by residues Asn264 and 321–323 (GIV).

This sequence belongs to the succinate/malate CoA ligase beta subunit family. In terms of assembly, heterotetramer of two alpha and two beta subunits. Mg(2+) serves as cofactor.

It carries out the reaction succinate + ATP + CoA = succinyl-CoA + ADP + phosphate. It catalyses the reaction GTP + succinate + CoA = succinyl-CoA + GDP + phosphate. It participates in carbohydrate metabolism; tricarboxylic acid cycle; succinate from succinyl-CoA (ligase route): step 1/1. Functionally, succinyl-CoA synthetase functions in the citric acid cycle (TCA), coupling the hydrolysis of succinyl-CoA to the synthesis of either ATP or GTP and thus represents the only step of substrate-level phosphorylation in the TCA. The beta subunit provides nucleotide specificity of the enzyme and binds the substrate succinate, while the binding sites for coenzyme A and phosphate are found in the alpha subunit. This chain is Succinate--CoA ligase [ADP-forming] subunit beta, found in Pectobacterium carotovorum subsp. carotovorum (strain PC1).